Here is a 411-residue protein sequence, read N- to C-terminus: Arginine deiminase 1 (411 aa).

C401 serves as the catalytic Amidino-cysteine intermediate.

Belongs to the arginine deiminase family.

The protein localises to the cytoplasm. It catalyses the reaction L-arginine + H2O = L-citrulline + NH4(+). Its pathway is amino-acid degradation; L-arginine degradation via ADI pathway; carbamoyl phosphate from L-arginine: step 1/2. The protein is Arginine deiminase 1 (arcA1) of Staphylococcus epidermidis (strain ATCC 12228 / FDA PCI 1200).